The following is a 432-amino-acid chain: Ubiquitin-like modifier-activating enzyme 5 (432 aa).

Positions 25 to 47 (ETKKNQTPSVLKGPTVSQERPSA) are disordered. The segment covering 29–44 (NQTPSVLKGPTVSQER) has biased composition (polar residues). Residues glycine 96, aspartate 117, lysine 140, asparagine 163, and asparagine 196 each contribute to the ATP site. Zn(2+) is bound by residues cysteine 238 and cysteine 241. Cysteine 262 functions as the Glycyl thioester intermediate in the catalytic mechanism. 2 residues coordinate Zn(2+): cysteine 315 and cysteine 320. The segment at 363 to 406 (DTTEAPSSSAATEVAPGLKFAYEPTQTPKKNSSDNLKLSPSQAV) is disordered. The span at 386-406 (PTQTPKKNSSDNLKLSPSQAV) shows a compositional bias: polar residues.

The protein belongs to the ubiquitin-activating E1 family. UBA5 subfamily. Interacts with ufc-1.

In terms of biological role, E1-like enzyme which activates ufm-1. Required for interaction between ufm-1 and ufc-1. The sequence is that of Ubiquitin-like modifier-activating enzyme 5 from Caenorhabditis briggsae.